A 364-amino-acid polypeptide reads, in one-letter code: UDP-N-acetylglucosamine--N-acetylmuramyl-(pentapeptide) pyrophosphoryl-undecaprenol N-acetylglucosamine transferase 1 (364 aa).

UDP-N-acetyl-alpha-D-glucosamine contacts are provided by residues 10 to 12 (TGG), asparagine 124, serine 195, isoleucine 250, and glutamine 295.

The protein belongs to the glycosyltransferase 28 family. MurG subfamily.

The protein resides in the cell membrane. The catalysed reaction is di-trans,octa-cis-undecaprenyl diphospho-N-acetyl-alpha-D-muramoyl-L-alanyl-D-glutamyl-meso-2,6-diaminopimeloyl-D-alanyl-D-alanine + UDP-N-acetyl-alpha-D-glucosamine = di-trans,octa-cis-undecaprenyl diphospho-[N-acetyl-alpha-D-glucosaminyl-(1-&gt;4)]-N-acetyl-alpha-D-muramoyl-L-alanyl-D-glutamyl-meso-2,6-diaminopimeloyl-D-alanyl-D-alanine + UDP + H(+). Its pathway is cell wall biogenesis; peptidoglycan biosynthesis. Its function is as follows. Cell wall formation. Catalyzes the transfer of a GlcNAc subunit on undecaprenyl-pyrophosphoryl-MurNAc-pentapeptide (lipid intermediate I) to form undecaprenyl-pyrophosphoryl-MurNAc-(pentapeptide)GlcNAc (lipid intermediate II). The protein is UDP-N-acetylglucosamine--N-acetylmuramyl-(pentapeptide) pyrophosphoryl-undecaprenol N-acetylglucosamine transferase 1 of Bacillus thuringiensis subsp. konkukian (strain 97-27).